The chain runs to 363 residues: Zinc phosphodiesterase ELAC protein 1 (363 aa).

Zn(2+) contacts are provided by His62, His64, Asp66, His67, His182, Asp253, and His313. Asp66 functions as the Proton acceptor in the catalytic mechanism.

This sequence belongs to the RNase Z family. As to quaternary structure, homodimer. Zn(2+) serves as cofactor.

Its subcellular location is the cytoplasm. It is found in the cytosol. It localises to the nucleus. The enzyme catalyses Endonucleolytic cleavage of RNA, removing extra 3' nucleotides from tRNA precursor, generating 3' termini of tRNAs. A 3'-hydroxy group is left at the tRNA terminus and a 5'-phosphoryl group is left at the trailer molecule.. Zinc phosphodiesterase, which displays some tRNA 3'-processing endonuclease activity. Specifically involved in tRNA repair: acts downstream of the ribosome-associated quality control (RQC) pathway by removing a 2',3'-cyclic phosphate from tRNAs following cleavage by ANKZF1. tRNAs are then processed by TRNT1. The protein is Zinc phosphodiesterase ELAC protein 1 (ELAC1) of Bos taurus (Bovine).